We begin with the raw amino-acid sequence, 1423 residues long: Guanine nucleotide exchange factor subunit RIC1 (1423 aa).

WD repeat units follow at residues 64–103 (TQFGSYKQAEWRPDSTMIAVSTANGYILFFHITSTRGDKY) and 304–343 (NKTGAVKLMRWSPDNSVVIVTWEYGGLSLWSVFGAQLICT). Residues 437–448 (ASQTQNPRSSST) show a composition bias toward polar residues. Positions 437–463 (ASQTQNPRSSSTHSEHKPSREKSPFAD) are disordered. The span at 449–460 (HSEHKPSREKSP) shows a compositional bias: basic and acidic residues. Phosphothreonine is present on residues T992 and T996. 5 positions are modified to phosphoserine: S1015, S1017, S1019, S1037, and S1172. Residues 1355-1423 (PDAFQPITMG…QDGTYDCSVS (69 aa)) form a disordered region. Over residues 1379–1397 (GSSSHGSIPQGEVGSSNMV) the composition is skewed to polar residues. The segment covering 1404 to 1413 (TAQAEEEEPF) has biased composition (acidic residues).

It belongs to the RIC1 family. Forms a complex with RGP1; the interaction enhances RAB6A GTPase activity. Interacts (via central domain) with RGP1. Interacts with RAB6A; the interaction is direct with a preference for RAB6A-GDP. Interacts (via C-terminus domain) with RAB33B; the interaction is direct with a preference for RAB33B-GTP. Interacts with GJA1. In terms of tissue distribution, present in kidney and various cell lines (at protein level). Widely expressed at low level.

It localises to the cytoplasm. It is found in the cytosol. Its subcellular location is the membrane. In terms of biological role, the RIC1-RGP1 complex acts as a guanine nucleotide exchange factor (GEF), which activates RAB6A by exchanging bound GDP for free GTP, and may thereby be required for efficient fusion of endosome-derived vesicles with the Golgi compartment. The RIC1-RGP1 complex participates in the recycling of mannose-6-phosphate receptors. Required for phosphorylation and localization of GJA1. Is a regulator of procollagen transport and secretion, and is required for correct cartilage morphogenesis and development of the craniofacial skeleton. This is Guanine nucleotide exchange factor subunit RIC1 from Homo sapiens (Human).